We begin with the raw amino-acid sequence, 521 residues long: GMP synthase [glutamine-hydrolyzing] (521 aa).

The Glutamine amidotransferase type-1 domain maps to 5 to 197 (KILILDFGSQ…VLDICGAQPG (193 aa)). Catalysis depends on cysteine 81, which acts as the Nucleophile. Active-site residues include histidine 171 and glutamate 173. A GMPS ATP-PPase domain is found at 198–390 (WTMPNYIEEA…LGLPREMVYR (193 aa)). ATP is bound at residue 225-231 (SGGVDSS).

Homodimer.

It catalyses the reaction XMP + L-glutamine + ATP + H2O = GMP + L-glutamate + AMP + diphosphate + 2 H(+). It participates in purine metabolism; GMP biosynthesis; GMP from XMP (L-Gln route): step 1/1. Functionally, catalyzes the synthesis of GMP from XMP. In Neisseria meningitidis serogroup B (strain ATCC BAA-335 / MC58), this protein is GMP synthase [glutamine-hydrolyzing] (guaA).